Consider the following 454-residue polypeptide: tRNA modification GTPase MnmE (454 aa).

Positions 23, 80, and 120 each coordinate (6S)-5-formyl-5,6,7,8-tetrahydrofolate. Residues Gly-216–Gly-377 form the TrmE-type G domain. Asn-226 serves as a coordination point for K(+). Residues Asn-226–Ser-231, Thr-245–Thr-251, Asp-270–Gly-273, Asn-335–Asp-338, and Ser-358–Arg-360 each bind GTP. Ser-230 is a binding site for Mg(2+). K(+) contacts are provided by Thr-245, Ile-247, and Thr-250. Thr-251 contributes to the Mg(2+) binding site. Lys-454 contributes to the (6S)-5-formyl-5,6,7,8-tetrahydrofolate binding site.

It belongs to the TRAFAC class TrmE-Era-EngA-EngB-Septin-like GTPase superfamily. TrmE GTPase family. As to quaternary structure, homodimer. Heterotetramer of two MnmE and two MnmG subunits. It depends on K(+) as a cofactor.

The protein resides in the cytoplasm. Functionally, exhibits a very high intrinsic GTPase hydrolysis rate. Involved in the addition of a carboxymethylaminomethyl (cmnm) group at the wobble position (U34) of certain tRNAs, forming tRNA-cmnm(5)s(2)U34. The polypeptide is tRNA modification GTPase MnmE (Yersinia pseudotuberculosis serotype IB (strain PB1/+)).